Here is a 599-residue protein sequence, read N- to C-terminus: Elongation factor 4 (599 aa).

Residues 2 to 184 (KNIRNFSIIA…RLVRDIPPPE (183 aa)) enclose the tr-type G domain. Residues 14–19 (DHGKST) and 131–134 (NKID) each bind GTP.

The protein belongs to the TRAFAC class translation factor GTPase superfamily. Classic translation factor GTPase family. LepA subfamily.

The protein localises to the cell inner membrane. The enzyme catalyses GTP + H2O = GDP + phosphate + H(+). Required for accurate and efficient protein synthesis under certain stress conditions. May act as a fidelity factor of the translation reaction, by catalyzing a one-codon backward translocation of tRNAs on improperly translocated ribosomes. Back-translocation proceeds from a post-translocation (POST) complex to a pre-translocation (PRE) complex, thus giving elongation factor G a second chance to translocate the tRNAs correctly. Binds to ribosomes in a GTP-dependent manner. The sequence is that of Elongation factor 4 from Escherichia coli (strain UTI89 / UPEC).